A 141-amino-acid chain; its full sequence is MAKKVVAVIKLALDAGKANPAPPVGPALGQHGVNIMMFCKEYNARTQDKAGYVIPVEISVFEDRSFTFITKTPPASVLITKAAKIQKGSGESAKGSVGSISRAQLEEIAKTKLPDLNCTSIESAMRIIEGTARNMGVSISD.

The protein belongs to the universal ribosomal protein uL11 family. As to quaternary structure, part of the ribosomal stalk of the 50S ribosomal subunit. Interacts with L10 and the large rRNA to form the base of the stalk. L10 forms an elongated spine to which L12 dimers bind in a sequential fashion forming a multimeric L10(L12)X complex. One or more lysine residues are methylated.

Forms part of the ribosomal stalk which helps the ribosome interact with GTP-bound translation factors. This is Large ribosomal subunit protein uL11 from Synechococcus sp. (strain CC9605).